The sequence spans 298 residues: Protein ABIL1 (298 aa).

Belongs to the ABI family. In terms of assembly, binds SCAR2. As to expression, expressed in seedlings, roots, hypocotyls, cotyledons, leaves, stems, and flowers.

It localises to the cytoplasm. Its subcellular location is the cytoskeleton. Its function is as follows. Involved in regulation of actin and microtubule organization. Part of a WAVE complex that activates the Arp2/3 complex. This is Protein ABIL1 (ABIL1) from Arabidopsis thaliana (Mouse-ear cress).